Consider the following 86-residue polypeptide: MNSKIFAVLFLLAFLSCVLSDQYCPKSSITACKKMNIRNDCCKDDDCTGGSWCCATPCGNFCKYPTDRPGGKRAAGGKSCKTSYVY.

The first 20 residues, 1–20 (MNSKIFAVLFLLAFLSCVLS), serve as a signal peptide directing secretion. The 46-residue stretch at 21 to 66 (DQYCPKSSITACKKMNIRNDCCKDDDCTGGSWCCATPCGNFCKYPT) folds into the WAP domain. Cystine bridges form between cysteine 24–cysteine 54, cysteine 32–cysteine 58, cysteine 41–cysteine 53, cysteine 42–cysteine 80, and cysteine 47–cysteine 62.

This sequence belongs to the venom protein 11 family. 01 (wap-1) subfamily. Post-translationally, contains 5 disulfide bonds. As to expression, expressed by the venom gland.

The protein localises to the secreted. Functionally, has antibacterial activity. The polypeptide is U15-lycotoxin-Ls1a (Lycosa singoriensis (Wolf spider)).